Consider the following 151-residue polypeptide: MTELKEQLSLLGRKTEYKQDYAPEVLEAFDNKHPENDYWVRFNCPEFTSLCPITGQPDFAEIRISYLPDVKMVESKSLKLYLFSFRNHGAFHEDCVNIIMKDLIRLMDPKYIEVTGIFTPRGGISIYPYANYGRPGTKYEEMAIHRLMNHE.

Cysteine 51 acts as the Thioimide intermediate in catalysis. Aspartate 58 (proton donor) is an active-site residue. Residues 73–75 (VES) and 92–93 (HE) each bind substrate.

The protein belongs to the GTP cyclohydrolase I family. QueF type 1 subfamily.

The protein localises to the cytoplasm. The enzyme catalyses 7-aminomethyl-7-carbaguanine + 2 NADP(+) = 7-cyano-7-deazaguanine + 2 NADPH + 3 H(+). It functions in the pathway tRNA modification; tRNA-queuosine biosynthesis. Catalyzes the NADPH-dependent reduction of 7-cyano-7-deazaguanine (preQ0) to 7-aminomethyl-7-deazaguanine (preQ1). This Bacteroides fragilis (strain ATCC 25285 / DSM 2151 / CCUG 4856 / JCM 11019 / LMG 10263 / NCTC 9343 / Onslow / VPI 2553 / EN-2) protein is NADPH-dependent 7-cyano-7-deazaguanine reductase.